A 684-amino-acid polypeptide reads, in one-letter code: MNKSEAEAKIRALRREINEHNYNYYNLAKPKISDYDFDALLRTLAELEAKYPDLVTPDSPSQRVGGEVTKNFPIVRHKTRMLSLSNTYNLGELGDFLARVAKSLESEGVQAYDFTAELKYDGVAVSLIYRDGLLVQGATRGDGSQGDEITANLKTVRTIPLRLRAPASGSAFDTEKWNGSGDIEVRGEVFMTKADFEKINAERDESEQFANPRNATAGTLKQQDSREVAKRRLTMVAYYLDGRPFADLSHGERLEKLAELGFYTGEAHRTCRSLQDIQAFLDEWENKRDALAYEIDGAVIKLNNVRYQELLGATSKSPRWAIAYKYAARRAETVLENVVFQVGRTGAITPVAELQPVKLSGSVISRSTLHNLDEIRRLDLHIGDRVIIEKSGDVIPKVVGVVAEKRPPEARTIEPLSTCPSCGTPLEHPENEVIYYCPNEFGCPAQRKARLVHFASRHAMDIEGLGEAVVEQLLGAGLIGDPGDLYFIEKTALLALERFAEKSAQNLLNGIEASKSRSFERLIFALGIRYVGRRTASILADRFTSLDTIKSASQAELCETEEIGETIAKSVALFFTKPQVQELLGKLERAGLRLASDKKSPDAPQTFAGMTVVFTGSLENFTRDDAAAKVGERGGKVTSTVSKKTSLVVAGKEAGGKLAKAEKLGVKIVTEAEFQTMLAAESGD.

NAD(+)-binding positions include 34–38, 83–84, and E117; these read DYDFD and SL. The active-site N6-AMP-lysine intermediate is the K119. NAD(+) contacts are provided by R140, E188, K301, and K325. The Zn(2+) site is built by C419, C422, C437, and C443. Residues 602-684 form the BRCT domain; that stretch reads DAPQTFAGMT…QTMLAAESGD (83 aa).

The protein belongs to the NAD-dependent DNA ligase family. LigA subfamily. Mg(2+) serves as cofactor. Requires Mn(2+) as cofactor.

It carries out the reaction NAD(+) + (deoxyribonucleotide)n-3'-hydroxyl + 5'-phospho-(deoxyribonucleotide)m = (deoxyribonucleotide)n+m + AMP + beta-nicotinamide D-nucleotide.. DNA ligase that catalyzes the formation of phosphodiester linkages between 5'-phosphoryl and 3'-hydroxyl groups in double-stranded DNA using NAD as a coenzyme and as the energy source for the reaction. It is essential for DNA replication and repair of damaged DNA. The sequence is that of DNA ligase from Chloroherpeton thalassium (strain ATCC 35110 / GB-78).